A 382-amino-acid polypeptide reads, in one-letter code: MNYYSINLAKAHLLNYPCPLNINFLWNYGFLLGIIFFIQILTGVFLASRYTPEISYAYYSIQHILRELWSGWCFRYMHATGASLVFLLTYLHILRGLNYSYLYLPLSWISGLIIFALFIVTAFIGYVLPWGQMSYWGATVITNLLSSIPVLVIWLCGGYTVSDPTIKRFFVLHFILPFVALCIVFIHIFFLHLHGSTNPLGYDTALKIPFYPNLLSLDVKGFNNIFILFLLQSIFGIIPLSHPDNAILVNTYVTPIQIVPEWYFLPFYAMLKTIPSKTAGLLIVLASLQLLFLLAEQRSLTTIIQFKMTFGAREYSVPMIWFMCSFYALLWIGCQLPQDIFILYGRLFIISFFSSGLFALVHYKRTHYDYSSQANIKITRLR.

4 helical membrane passes run 28-48 (YGFL…FLAS), 72-94 (WCFR…LHIL), 107-127 (SWIS…IGYV), and 169-189 (FFVL…IHIF). Heme b is bound by residues histidine 78 and histidine 92. 2 residues coordinate heme b: histidine 173 and histidine 187. Histidine 192 is a binding site for a ubiquinone. 4 helical membrane passes run 214–234 (LLSL…LQSI), 274–294 (IPSK…LFLL), 317–337 (VPMI…CQLP), and 340–360 (IFIL…LFAL).

The protein belongs to the cytochrome b family. The main subunits of complex b-c1 are: cytochrome b, cytochrome c1 and the Rieske protein. Requires heme b as cofactor.

The protein localises to the mitochondrion inner membrane. Functionally, component of the ubiquinol-cytochrome c reductase complex (complex III or cytochrome b-c1 complex) that is part of the mitochondrial respiratory chain. The b-c1 complex mediates electron transfer from ubiquinol to cytochrome c. Contributes to the generation of a proton gradient across the mitochondrial membrane that is then used for ATP synthesis. In Plasmodium vivax (strain Salvador I), this protein is Cytochrome b (MT-CYB).